A 380-amino-acid polypeptide reads, in one-letter code: Shaggy-related protein kinase eta (380 aa).

Residues 40 to 324 (YMAERVVGTG…ALEACAHPFF (285 aa)) enclose the Protein kinase domain. Residues 46 to 54 (VGTGSFGIV) and lysine 69 each bind ATP. The residue at position 104 (threonine 104) is a Phosphothreonine. Position 105 is a phosphoserine (serine 105). Aspartate 165 functions as the Proton acceptor in the catalytic mechanism. Residue serine 187 is modified to Phosphoserine. Tyrosine 200 carries the post-translational modification Phosphotyrosine. Threonine 220 and threonine 261 each carry phosphothreonine. Serine 310 is subject to Phosphoserine. At threonine 314 the chain carries Phosphothreonine. Serine 353 carries the post-translational modification Phosphoserine.

This sequence belongs to the protein kinase superfamily. CMGC Ser/Thr protein kinase family. GSK-3 subfamily. Interacts in vitro with the C-terminal fragment of BZR1 and with BES1/BZR2, but not through the kinase domain. Interacts with BHLH150, beet curly top virus AL4/C4 and tomato golden mosaic virus AL4/AC4. Interacts with YDA. Interacts with MKK4. Interacts with KIB1 and KIB2 in a brassinosteroid (BR)-dependent manner. Interacts with BSK1, BSK6, BSK8 and BSK11. Binds to WRKY46, WRKY54 and WRKY70. Component of a complex made of POLAR, BASL, ASK7/BIN2 and ASK3/SK12. Binds to POLAR and BASL. In terms of processing, autophosphorylated mainly on threonine and serine residues. Post-translationally, ubiquitination and subsequent proteasomal degradation mediated by KIB1. As to expression, in the two outer cell layers of the developing seed coat and restricted to the suspensor cells in developing embryos. Mostly expressed in stomatal lineage cells with asymmetric cell division (ACD) potential. Observed in small cells of non-protruding hypocotyl cell files and of developing cotyledon epidermis.

It is found in the cytoplasm. It localises to the cell cortex. Its subcellular location is the nucleus. The protein resides in the cell membrane. The catalysed reaction is L-seryl-[protein] + ATP = O-phospho-L-seryl-[protein] + ADP + H(+). It catalyses the reaction L-threonyl-[protein] + ATP = O-phospho-L-threonyl-[protein] + ADP + H(+). With respect to regulation, inactivated by an unknown mechanism after binding of brassinosteroids to the brassinosteroid receptor complex. Inhibited by lithium. Inhibited by dephosphorylation at Tyr-200 by BSU1. Competitive inhibition by KIB1 that reduces substrate (e.g. BZR1) access. Repressed by bikinin. Its function is as follows. Negative regulator in brassinosteroid signal transduction pathway important for plant growth. May be also involved in auxin signaling pathway. Phosphorylates and increases the degradation of BZR1 and BZR2/BES1 by the proteasome. Phosphorylates BHLH150, beet curly top virus C4 and tomato golden mosaic virus AC4 on threonine and serine residues. Upon brassinosteroid signaling, inhibits stomatal development by phosphorylating and inhibiting the MAPKK kinase YDA and the MAPK kinases MKK4 and MKK5. Phosphorylates BSK1, BSK3, BSK5, BSK6, BSK8 and BSK11 in vitro. Phoyphorylates and destabilizes WRKY46, WRKY54 and WRKY70. Mediates BASL nuclear exclusion; kinase activity is required for this function. Required first at the cortical polarity site, to restrict MAPK signaling and promote asymmetric cell division (ACD), and second in the nucleus of stomatal lineage ground cells (SLGCs) or meristemoids, to limit cell division and to promote differentiation into pavement or stomatal guard cells, respectively, likely by initiating BASL polarization. Phosphorylates BASL, YDA and SPCH in vitro and POLAR in vivo. Phosphorylates and inhibits SPCH in the nucleus of SLGC undergoing ACD, thus negatively regulating stomatal development. This is Shaggy-related protein kinase eta from Arabidopsis thaliana (Mouse-ear cress).